A 335-amino-acid polypeptide reads, in one-letter code: MAKIYKDEDISLEPIKNKTIAILGYGSQGRAWALNLRDSGLNVVVGLERQGDSWRRAIDDGFKPMYTKDAVAIADIIVFLVPDMVQKSLWLNSVKDFMKKGADLVFAHGFNIHFKIIEPPKDSDVYMIAPKSPGPIVRRSYEMGGGVPALVAVYQNVSGEALQKALAIAKGIGCARAGVIESTFKEETETDLFGEQVILVGGIMELIKASFETLVEEGYQPEVAYFETVNELKLIVDLIYEKGLTGMLRAVSDTAKYGGITVGKFIIDKSVRDKMKIVLERIRSGEFAREWIKEYERGMPTVFKELSELEGSTIETVGRKLREMMFRGMKQISSH.

The KARI N-terminal Rossmann domain maps to 2–182 (AKIYKDEDIS…GCARAGVIES (181 aa)). NADP(+) is bound by residues 25 to 28 (YGSQ), R49, S53, and 83 to 86 (DMVQ). The active site involves H108. G134 serves as a coordination point for NADP(+). A KARI C-terminal knotted domain is found at 183 to 328 (TFKEETETDL…RKLREMMFRG (146 aa)). Mg(2+) is bound by residues D191, E195, E227, and E231. S252 contributes to the substrate binding site.

This sequence belongs to the ketol-acid reductoisomerase family. As to quaternary structure, homodimer. Mg(2+) serves as cofactor.

The catalysed reaction is (2R)-2,3-dihydroxy-3-methylbutanoate + NAD(+) = (2S)-2-acetolactate + NADH + H(+). The enzyme catalyses (2R)-2,3-dihydroxy-3-methylbutanoate + NADP(+) = (2S)-2-acetolactate + NADPH + H(+). Its pathway is amino-acid biosynthesis; L-isoleucine biosynthesis; L-isoleucine from 2-oxobutanoate: step 2/4. The protein operates within amino-acid biosynthesis; L-valine biosynthesis; L-valine from pyruvate: step 2/4. Involved in the biosynthesis of branched-chain amino acids (BCAA). Catalyzes an alkyl-migration followed by a ketol-acid reduction of (S)-2-acetolactate (S2AL) to yield (R)-2,3-dihydroxy-isovalerate. In the isomerase reaction, S2AL is rearranged via a Mg-dependent methyl migration to produce 3-hydroxy-3-methyl-2-ketobutyrate (HMKB). In the reductase reaction, this 2-ketoacid undergoes a metal-dependent reduction by NADPH or NADH to yield (R)-2,3-dihydroxy-isovalerate. This Ignisphaera aggregans (strain DSM 17230 / JCM 13409 / AQ1.S1) protein is Ketol-acid reductoisomerase (NAD(P)(+)).